The sequence spans 176 residues: Peptide deformylase 2 (176 aa).

The Fe cation site is built by C99 and H141. Residue E142 is part of the active site. H145 provides a ligand contact to Fe cation.

Belongs to the polypeptide deformylase family. Requires Fe(2+) as cofactor.

The catalysed reaction is N-terminal N-formyl-L-methionyl-[peptide] + H2O = N-terminal L-methionyl-[peptide] + formate. Removes the formyl group from the N-terminal Met of newly synthesized proteins. Requires at least a dipeptide for an efficient rate of reaction. N-terminal L-methionine is a prerequisite for activity but the enzyme has broad specificity at other positions. This is Peptide deformylase 2 from Bordetella bronchiseptica (strain ATCC BAA-588 / NCTC 13252 / RB50) (Alcaligenes bronchisepticus).